The sequence spans 424 residues: DNA primase DnaG (424 aa).

The Toprim domain maps to 171–245 (DDIIVVEGRA…DVDFVARAPP (75 aa)). Residues E177, D219, and D221 each contribute to the Mg(2+) site.

This sequence belongs to the archaeal DnaG primase family. In terms of assembly, forms a ternary complex with MCM helicase and DNA. Mg(2+) serves as cofactor.

It carries out the reaction ssDNA + n NTP = ssDNA/pppN(pN)n-1 hybrid + (n-1) diphosphate.. Functionally, RNA polymerase that catalyzes the synthesis of short RNA molecules used as primers for DNA polymerase during DNA replication. The protein is DNA primase DnaG of Methanocaldococcus jannaschii (strain ATCC 43067 / DSM 2661 / JAL-1 / JCM 10045 / NBRC 100440) (Methanococcus jannaschii).